Consider the following 90-residue polypeptide: Protein LURE 1.2 (90 aa).

The N-terminal stretch at 1–19 (MKLPIIFLTLLIFVSSCTS) is a signal peptide. Asparagine 23 is a glycosylation site (N-linked (GlcNAc...) asparagine). 3 cysteine pairs are disulfide-bonded: cysteine 58–cysteine 75, cysteine 61–cysteine 82, and cysteine 65–cysteine 84. The PRK6 binding stretch occupies residues 67–87 (RRGKYIRTCSFERKLCRCSIS).

The protein belongs to the DEFL family. Interacts with MDIS1, MIK1, MIK2 and TDR/PXY, but not with MDIS2. Binds to PRK6 LRRs. As to expression, expressed in the pistil. Detected exclusively in the synergid cells.

Its subcellular location is the secreted. In terms of biological role, pollen tube attractants guiding pollen tubes to the ovular micropyle. Attracts specifically pollen tubes from A.thaliana, but not those from A.lyrata. Triggers endocytosis of MDIS1 in the pollen tube tip. The chain is Protein LURE 1.2 from Arabidopsis thaliana (Mouse-ear cress).